The primary structure comprises 309 residues: Aspartate carbamoyltransferase catalytic subunit (309 aa).

The carbamoyl phosphate site is built by R55 and T56. L-aspartate is bound at residue K85. Carbamoyl phosphate-binding residues include R106, H135, and Q138. R168 and R230 together coordinate L-aspartate. Residues L268 and P269 each coordinate carbamoyl phosphate.

It belongs to the aspartate/ornithine carbamoyltransferase superfamily. ATCase family. As to quaternary structure, heterododecamer (2C3:3R2) of six catalytic PyrB chains organized as two trimers (C3), and six regulatory PyrI chains organized as three dimers (R2).

The enzyme catalyses carbamoyl phosphate + L-aspartate = N-carbamoyl-L-aspartate + phosphate + H(+). Its pathway is pyrimidine metabolism; UMP biosynthesis via de novo pathway; (S)-dihydroorotate from bicarbonate: step 2/3. Catalyzes the condensation of carbamoyl phosphate and aspartate to form carbamoyl aspartate and inorganic phosphate, the committed step in the de novo pyrimidine nucleotide biosynthesis pathway. This is Aspartate carbamoyltransferase catalytic subunit from Vibrio vulnificus (strain CMCP6).